The following is a 173-amino-acid chain: Crossover junction endodeoxyribonuclease RuvC (173 aa).

Active-site residues include aspartate 8, glutamate 67, and aspartate 139. Mg(2+)-binding residues include aspartate 8, glutamate 67, and aspartate 139.

It belongs to the RuvC family. Homodimer which binds Holliday junction (HJ) DNA. The HJ becomes 2-fold symmetrical on binding to RuvC with unstacked arms; it has a different conformation from HJ DNA in complex with RuvA. In the full resolvosome a probable DNA-RuvA(4)-RuvB(12)-RuvC(2) complex forms which resolves the HJ. Mg(2+) serves as cofactor.

It localises to the cytoplasm. It catalyses the reaction Endonucleolytic cleavage at a junction such as a reciprocal single-stranded crossover between two homologous DNA duplexes (Holliday junction).. The RuvA-RuvB-RuvC complex processes Holliday junction (HJ) DNA during genetic recombination and DNA repair. Endonuclease that resolves HJ intermediates. Cleaves cruciform DNA by making single-stranded nicks across the HJ at symmetrical positions within the homologous arms, yielding a 5'-phosphate and a 3'-hydroxyl group; requires a central core of homology in the junction. The consensus cleavage sequence is 5'-(A/T)TT(C/G)-3'. Cleavage occurs on the 3'-side of the TT dinucleotide at the point of strand exchange. HJ branch migration catalyzed by RuvA-RuvB allows RuvC to scan DNA until it finds its consensus sequence, where it cleaves and resolves the cruciform DNA. The protein is Crossover junction endodeoxyribonuclease RuvC of Shewanella woodyi (strain ATCC 51908 / MS32).